We begin with the raw amino-acid sequence, 485 residues long: MEYRLLVGLEVHVQLGLKTKAFCGCKNDFGGIPNSRTCPTCLGLPGALPSVNKELINSAILAGHATNSKIRNIVKFDRKHYVYPDLPKGYQISQNDAPICNNGFIFIETSSGLKKINIVRIHMEEDSGKSLHLLESENRSYIDFNRAGAPLLEIVSEPDINSGEEAVAYLNSLREIFRYLDLSDCSMENGSFRCDVNVNLLINENDVEYKTPISEIKNLNSFKSIKLAIDYEESRQKEEWILHRKTFESIGKHTMGFDDKRGITVFQRSKETVADYRYIKDPDLPLIKLDDVYIESIKSNKMVELPLDTRIRLKEQYGLSNFDVVTLTSDKNLVKYFEEAAMTSSDPKRVSNWILSEVLSVLNDREISILDFNLPPSYISELVEFIVSGKVSGKIAKEIFLEMLKRNVSPAIIINEKNLEQISDKSFIESVVLEVLNENPKSIELYKKGKSHAIKFMMGQIMLKTSGRVNPAFANEILMNKLRDV.

Belongs to the GatB/GatE family. GatB subfamily. As to quaternary structure, heterotrimer of A, B and C subunits.

It carries out the reaction L-glutamyl-tRNA(Gln) + L-glutamine + ATP + H2O = L-glutaminyl-tRNA(Gln) + L-glutamate + ADP + phosphate + H(+). The enzyme catalyses L-aspartyl-tRNA(Asn) + L-glutamine + ATP + H2O = L-asparaginyl-tRNA(Asn) + L-glutamate + ADP + phosphate + 2 H(+). Allows the formation of correctly charged Asn-tRNA(Asn) or Gln-tRNA(Gln) through the transamidation of misacylated Asp-tRNA(Asn) or Glu-tRNA(Gln) in organisms which lack either or both of asparaginyl-tRNA or glutaminyl-tRNA synthetases. The reaction takes place in the presence of glutamine and ATP through an activated phospho-Asp-tRNA(Asn) or phospho-Glu-tRNA(Gln). In Borrelia hermsii (strain HS1 / DAH), this protein is Aspartyl/glutamyl-tRNA(Asn/Gln) amidotransferase subunit B.